Consider the following 319-residue polypeptide: Olfactory receptor 2S2 (319 aa).

Over 1-26 (MEKANETSPVMGFVLLRLSAHPELEK) the chain is Extracellular. Residue asparagine 5 is glycosylated (N-linked (GlcNAc...) asparagine). The helical transmembrane segment at 27–50 (TFFVLILLMYLVILLGNGVLILVT) threads the bilayer. Residues 51-58 (ILDSRLHT) are Cytoplasmic-facing. Residues 59-80 (PMYFFLGNLSFLDICFTTSSVP) form a helical membrane-spanning segment. Residues 81–101 (LVLDSFLTPQETISFSACAVQ) are Extracellular-facing. Cysteine 98 and cysteine 190 are joined by a disulfide. A helical transmembrane segment spans residues 102-121 (MALSFAMAGTECLLLSMMAF). The Cytoplasmic portion of the chain corresponds to 122–140 (DRYVAICNPLRYSVIMSKA). The chain crosses the membrane as a helical span at residues 141–159 (AYMPMAASSWAIGGAASVV). Residues 160 to 196 (HTSLAIQLPFCGDNVINHFTCEILAVLKLACADISIN) lie on the Extracellular side of the membrane. A helical membrane pass occupies residues 197–220 (VISMEVTNVIFLGVPVLFISFSYV). Residues 221–237 (FIITTILRIPSAEGRKK) lie on the Cytoplasmic side of the membrane. Residues 238–260 (VFSTCSAHLTVVIVFYGTLFFMY) traverse the membrane as a helical segment. Residues 261 to 279 (GKPKSKDSMGADKEDLSDK) lie on the Extracellular side of the membrane. The chain crosses the membrane as a helical span at residues 280-299 (LIPLFYGVVTPMLNPIIYSL). The Cytoplasmic segment spans residues 300 to 319 (RNKDVKAAVRRLLRPKGFTQ).

This sequence belongs to the G-protein coupled receptor 1 family.

It localises to the cell membrane. In terms of biological role, odorant receptor. This chain is Olfactory receptor 2S2 (OR2S2), found in Homo sapiens (Human).